Here is a 525-residue protein sequence, read N- to C-terminus: GMP synthase [glutamine-hydrolyzing] (525 aa).

A Glutamine amidotransferase type-1 domain is found at 13 to 202; sequence TILVLDFGSQ…AVEICQAAQT (190 aa). Catalysis depends on Cys89, which acts as the Nucleophile. Active-site residues include His176 and Glu178. One can recognise a GMPS ATP-PPase domain in the interval 203 to 400; the sequence is WTMENFIDTE…LGISHELVWR (198 aa). 231–237 is a binding site for ATP; it reads SGGVDST. Residues Arg304, Asp462, Lys517, and Glu523 each contribute to the XMP site.

Homodimer. Mg(2+) is required as a cofactor.

It is found in the cytoplasm. The protein resides in the cytosol. The catalysed reaction is XMP + L-glutamine + ATP + H2O = GMP + L-glutamate + AMP + diphosphate + 2 H(+). It participates in purine metabolism; GMP biosynthesis; GMP from XMP (L-Gln route): step 1/1. In terms of biological role, catalyzes the conversion of xanthine monophosphate (XMP) to GMP in the presence of glutamine and ATP through an adenyl-XMP intermediate. The protein is GMP synthase [glutamine-hydrolyzing] (GUA1) of Eremothecium gossypii (strain ATCC 10895 / CBS 109.51 / FGSC 9923 / NRRL Y-1056) (Yeast).